An 801-amino-acid polypeptide reads, in one-letter code: MSLLHIAVILPLIFVLIIPILYRFFKRIHLGWFVLPVPIVIFIYMLTLIKTTMSGNTVMKTLNWMPHFGMNFDLYLDGLGLLFSLLISGIGSLVVLYSIGYLNKSEQLGNFYCYLLLFMGAMLGVVLSDNVIILYLFWELTSFSSFLLISFWRERQASIYGAQKSLIITVFGGLSLLGGIILLAIPTQSFSIQYMIQHASEIQNSPFFIFAMILIMIGAFTKSAQFPFYIWLPDAMEAPTPVSAYLHSATMVKAGLYLIARMTPIFAASQGWIWTVTLVGLITLFWASLNATKQQDLKGILAFSTVSQLGMIMAMLGIGAISYHYQGDDSKIYAAAFTAAIFHLINHATFKGALFMITGAVDHSTGTRDVKKLGGLLTIMPISFTITVITALSMAGVPPFNGFLSKESFLETTFTASQANLFSVDTLGYLFPIIGIVGSVFTFVYSIKFIMHIFFGQYKPEQLPKKAHEVSILMLLSPAILATLVIVFGLFPGILTNSIIEPATSSINHTVIDDVEFHMFHGLTPAFLSTLVIYILGILLIVTFSYWVKLLQRQPGKLTFNYWYNRSANVIPNYSEKMTNSYVTDYSRNNLVIIFGALILLTFVTVFSVPFNINFKDVSPIRIFEVCIVILLLSAAFLILFAKSRLFNIIMLSAVGYAVSVLFIFFKAPDLALTQFVVESISTALFLLCFYHLPNLNRYNEKRSFQLTNALIAGGVGLSVIIIGLIAYGNRHFESISKFYQEHVYDLAHGKNMVNVILVDFRGMDTLFESSVLGIAGLAVYTMIKLRKKRQTQGNEVKNHE.

19 consecutive transmembrane segments (helical) span residues 1 to 21 (MSLLHIAVILPLIFVLIIPIL), 28 to 48 (IHLGWFVLPVPIVIFIYMLTL), 79 to 99 (LGLLFSLLISGIGSLVVLYSI), 117 to 137 (LFMGAMLGVVLSDNVIILYLF), 166 to 186 (LIITVFGGLSLLGGIILLAIP), 206 to 226 (PFFIFAMILIMIGAFTKSAQF), 265 to 285 (IFAASQGWIWTVTLVGLITLF), 300 to 320 (ILAFSTVSQLGMIMAMLGIGA), 337 to 357 (FTAAIFHLINHATFKGALFMI), 373 to 393 (LGGLLTIMPISFTITVITALS), 427 to 447 (LGYLFPIIGIVGSVFTFVYSI), 472 to 492 (ILMLLSPAILATLVIVFGLFP), 522 to 542 (GLTPAFLSTLVIYILGILLIV), 591 to 611 (LVIIFGALILLTFVTVFSVPF), 623 to 643 (IFEVCIVILLLSAAFLILFAK), 646 to 666 (LFNIIMLSAVGYAVSVLFIFF), 671 to 691 (LALTQFVVESISTALFLLCFY), 707 to 727 (LTNALIAGGVGLSVIIIGLIA), and 764 to 784 (MDTLFESSVLGIAGLAVYTMI).

Belongs to the CPA3 antiporters (TC 2.A.63) subunit A family. As to quaternary structure, may form a heterooligomeric complex that consists of seven subunits: mnhA1, mnhB1, mnhC1, mnhD1, mnhE1, mnhF1 and mnhG1.

It is found in the cell membrane. Functionally, mnh complex is a Na(+)/H(+) antiporter involved in Na(+) excretion. The sequence is that of Na(+)/H(+) antiporter subunit A1 (mnhA1) from Staphylococcus aureus (strain bovine RF122 / ET3-1).